The primary structure comprises 114 residues: uncharacterized protein (114 aa).

Positions 13-99 (YYAVIFSSVK…VWYESYAVRV (87 aa)) constitute an ABM domain.

This is an uncharacterized protein from Bacillus subtilis (strain 168).